The following is a 348-amino-acid chain: Selenide, water dikinase (348 aa).

C17 is a catalytic residue. ATP-binding positions include K20 and 47–49; that span reads RAD. Mg(2+) is bound at residue D50. Residues D67, D90, and 138 to 140 each bind ATP; that span reads GHT. D90 contributes to the Mg(2+) binding site. D226 contacts Mg(2+).

It belongs to the selenophosphate synthase 1 family. Class I subfamily. Homodimer. Mg(2+) is required as a cofactor.

It catalyses the reaction hydrogenselenide + ATP + H2O = selenophosphate + AMP + phosphate + 2 H(+). In terms of biological role, synthesizes selenophosphate from selenide and ATP. In Pelobacter propionicus (strain DSM 2379 / NBRC 103807 / OttBd1), this protein is Selenide, water dikinase.